The sequence spans 660 residues: DNA ligase (660 aa).

NAD(+) contacts are provided by residues 33–37, 82–83, and glutamate 110; these read DFVYD and SL. The active-site N6-AMP-lysine intermediate is lysine 112. Residues arginine 133, glutamate 167, lysine 281, and lysine 305 each coordinate NAD(+). Cysteine 396, cysteine 399, cysteine 412, and cysteine 417 together coordinate Zn(2+). In terms of domain architecture, BRCT spans 583–660; the sequence is GENKLLAGKK…SFEDIKSYLD (78 aa).

The protein belongs to the NAD-dependent DNA ligase family. LigA subfamily. Mg(2+) serves as cofactor. The cofactor is Mn(2+).

It carries out the reaction NAD(+) + (deoxyribonucleotide)n-3'-hydroxyl + 5'-phospho-(deoxyribonucleotide)m = (deoxyribonucleotide)n+m + AMP + beta-nicotinamide D-nucleotide.. In terms of biological role, DNA ligase that catalyzes the formation of phosphodiester linkages between 5'-phosphoryl and 3'-hydroxyl groups in double-stranded DNA using NAD as a coenzyme and as the energy source for the reaction. It is essential for DNA replication and repair of damaged DNA. The chain is DNA ligase from Borreliella burgdorferi (strain ATCC 35210 / DSM 4680 / CIP 102532 / B31) (Borrelia burgdorferi).